Reading from the N-terminus, the 1059-residue chain is Endo-1,4-beta-xylanase A (1059 aa).

The N-terminal stretch at 1–30 (MQVRKRRGLLDVSTAVLVGILAGFLGVVLA) is a signal peptide. The A-1 stretch occupies residues 47 to 199 (SSLETVLALS…LDKVQVLAPK (153 aa)). Residues 200 to 354 (ESGPKVIYET…DDVKIVDTTS (155 aa)) are A-2. Positions 364–692 (EKEIPALKEV…KLAYWAIVAP (329 aa)) constitute a GH10 domain. E502 serves as the catalytic Proton donor. E608 serves as the catalytic Nucleophile. 2 CBM-cenC domains span residues 700 to 870 (KESR…LEGI) and 871 to 1059 (MVAT…RLIK).

The protein belongs to the glycosyl hydrolase 10 (cellulase F) family.

It catalyses the reaction Endohydrolysis of (1-&gt;4)-beta-D-xylosidic linkages in xylans.. This chain is Endo-1,4-beta-xylanase A (xynA), found in Thermotoga maritima (strain ATCC 43589 / DSM 3109 / JCM 10099 / NBRC 100826 / MSB8).